The chain runs to 334 residues: Glycerol-3-phosphate dehydrogenase [NAD(P)+] 2 (334 aa).

NADPH is bound by residues Trp-16, Arg-36, Arg-37, and Lys-110. Residues Lys-110 and Gly-140 each contribute to the sn-glycerol 3-phosphate site. Ala-144 serves as a coordination point for NADPH. 5 residues coordinate sn-glycerol 3-phosphate: Lys-195, Asp-248, Ser-258, Arg-259, and Asn-260. The Proton acceptor role is filled by Lys-195. Position 259 (Arg-259) interacts with NADPH. Positions 282 and 284 each coordinate NADPH.

The protein belongs to the NAD-dependent glycerol-3-phosphate dehydrogenase family.

The protein localises to the cytoplasm. It carries out the reaction sn-glycerol 3-phosphate + NAD(+) = dihydroxyacetone phosphate + NADH + H(+). The catalysed reaction is sn-glycerol 3-phosphate + NADP(+) = dihydroxyacetone phosphate + NADPH + H(+). It functions in the pathway membrane lipid metabolism; glycerophospholipid metabolism. In terms of biological role, catalyzes the reduction of the glycolytic intermediate dihydroxyacetone phosphate (DHAP) to sn-glycerol 3-phosphate (G3P), the key precursor for phospholipid synthesis. The chain is Glycerol-3-phosphate dehydrogenase [NAD(P)+] 2 from Mycobacterium bovis (strain ATCC BAA-935 / AF2122/97).